Here is a 131-residue protein sequence, read N- to C-terminus: Fumarate reductase subunit C (131 aa).

Helical transmembrane passes span 30–50 (EGTA…LFAL), 57–77 (WMGF…LITL), and 109–129 (IIKG…YVAL).

It belongs to the FrdC family. In terms of assembly, part of an enzyme complex containing four subunits: a flavoprotein (FrdA), an iron-sulfur protein (FrdB), and two hydrophobic anchor proteins (FrdC and FrdD).

Its subcellular location is the cell inner membrane. Two distinct, membrane-bound, FAD-containing enzymes are responsible for the catalysis of fumarate and succinate interconversion; fumarate reductase is used in anaerobic growth, and succinate dehydrogenase is used in aerobic growth. Anchors the catalytic components of the fumarate reductase complex to the cell inner membrane, binds quinones. In Salmonella choleraesuis (strain SC-B67), this protein is Fumarate reductase subunit C.